The sequence spans 664 residues: Probable urea active transporter 1 (664 aa).

16 consecutive transmembrane segments (helical) span residues serine 9 to valine 29, glycine 56 to alanine 76, glycine 86 to isoleucine 106, glycine 132 to glycine 152, threonine 165 to isoleucine 185, phenylalanine 189 to alanine 209, glycine 252 to glycine 272, isoleucine 290 to valine 310, methionine 327 to glycine 347, alanine 353 to valine 373, leucine 395 to threonine 415, tyrosine 428 to phenylalanine 448, isoleucine 454 to valine 474, alanine 496 to phenylalanine 516, valine 555 to threonine 575, and tryptophan 587 to leucine 607.

It belongs to the sodium:solute symporter (SSF) (TC 2.A.21) family.

The protein localises to the membrane. Involved in active transport of urea. The chain is Probable urea active transporter 1 (dur3-1) from Schizosaccharomyces pombe (strain 972 / ATCC 24843) (Fission yeast).